We begin with the raw amino-acid sequence, 371 residues long: Repetitive proline-rich cell wall protein 2 (371 aa).

An N-terminal signal peptide occupies residues 1-22 (MASSNLLVLLLFALFAIPRGLA). Repeat copies occupy residues 32–36 (PPVYK), 37–41 (PPVEK), 42–46 (PPVYK), 47–51 (PPVEK), 52–56 (PPVYK), 57–61 (PPVEK), 62–66 (PPVYK), 67–71 (PPVEK), 72–76 (PPVYK), 77–81 (PPVEK), 82–86 (PPVYK), 87–91 (PPVEK), 92–96 (PPVYK), 97–101 (PPVEK), 102–106 (PPVYK), 107–111 (PPVEK), 112–116 (PPVYK), 117–121 (PPVEK), 122–126 (PPVYK), 127–131 (PPVEK), 132–136 (PPVYK), 137–141 (PPVEK), 142–146 (PPVYK), 147–151 (PPVEK), 152–156 (PPVYK), 157–161 (PPVEK), 162–166 (PPVYK), 167–171 (PPVEK), 172–176 (PPVYK), 177–181 (PPVEK), 182–186 (PPVYK), 187–191 (PPVEK), 192–196 (PPVYK), 197–201 (PPVEK), 202–206 (PPVYK), 207–211 (PPVEK), 212–216 (PPVYK), 217–221 (PPVEK), 222–226 (PPVYK), 227–231 (PPVEK), 232–236 (PPIYK), 237–241 (PPVEK), 242–246 (PPVYK), 247–251 (PPVEK), 252–256 (PPVYK), 257–261 (PPVEK), 262–266 (PPIYK), 267–271 (PPVEK), 272–276 (PPVYK), 277–281 (PPVEK), 282–286 (PPVYK), 287–291 (PPVEK), 292–296 (PPVYK), 297–301 (PPVEK), 302–306 (PPVYK), 307–311 (PPVEK), 312–316 (PPVYK), 317–321 (PPVYK), 322–326 (PPVYK), 327–331 (PPVEK), 332–336 (PPVYK), 337–341 (PPVYK), 342–346 (PPVEK), 347–351 (PPVYK), 352–356 (PPVYK), and 357–361 (PPVEK). Positions 32 to 366 (PPVYKPPVEK…PPVEKPPVYG (335 aa)) are 67 X 5 AA approximate tandem repeats of P-P-[IV]-[EY]-K. Residues 49–317 (VEKPPVYKPP…PVEKPPVYKP (269 aa)) form a disordered region. The segment at 339 to 371 (VYKPPVEKPPVYKPPVYKPPVEKPPVYGPPHHP) is disordered. Residues 362–366 (PPVYG) form a 67; approximate repeat.

It belongs to the plant proline-rich protein superfamily. ENOD12 family. In terms of tissue distribution, expressed in hypocotyls, roots and mature root nodules.

Its subcellular location is the secreted. It localises to the cell wall. Functionally, this is a developmentally regulated putative cell wall protein. The protein is Repetitive proline-rich cell wall protein 2 (PRP2) of Medicago truncatula (Barrel medic).